The following is a 134-amino-acid chain: ATP synthase epsilon chain, chloroplastic (134 aa).

Belongs to the ATPase epsilon chain family. As to quaternary structure, F-type ATPases have 2 components, CF(1) - the catalytic core - and CF(0) - the membrane proton channel. CF(1) has five subunits: alpha(3), beta(3), gamma(1), delta(1), epsilon(1). CF(0) has three main subunits: a, b and c.

The protein localises to the plastid. It is found in the chloroplast thylakoid membrane. Produces ATP from ADP in the presence of a proton gradient across the membrane. This Nymphaea alba (White water-lily) protein is ATP synthase epsilon chain, chloroplastic.